A 306-amino-acid chain; its full sequence is Serine/threonine-protein phosphatase PP2A-1 catalytic subunit (306 aa).

Positions 54, 56, 82, and 114 each coordinate Mn(2+). The active-site Proton donor is the His115. His164 and His238 together coordinate Mn(2+).

Belongs to the PPP phosphatase family. PP-2A subfamily. Mn(2+) is required as a cofactor.

It is found in the cytoplasm. It catalyses the reaction O-phospho-L-seryl-[protein] + H2O = L-seryl-[protein] + phosphate. It carries out the reaction O-phospho-L-threonyl-[protein] + H2O = L-threonyl-[protein] + phosphate. In Oryza sativa subsp. indica (Rice), this protein is Serine/threonine-protein phosphatase PP2A-1 catalytic subunit (PP2A1).